Reading from the N-terminus, the 365-residue chain is Pre-mRNA-splicing factor srp2 (365 aa).

RRM domains are found at residues 6 to 69 (LFVG…RIVV) and 100 to 166 (LIVE…AVTL). Residues 166–365 (LREDPDAANE…SAEGQVAAEW (200 aa)) are disordered. The segment covering 184–194 (FRSRSPPARRR) has biased composition (basic residues). Phosphoserine occurs at positions 186, 188, 276, 294, 296, 298, and 308. Over residues 195–307 (YRDDYRRGGD…SPRRDREENR (113 aa)) the composition is skewed to basic and acidic residues. A compositionally biased stretch (low complexity) spans 316 to 332 (SYSAAPEASMESSAPTE). Positions 341–353 (EEQQPLQNHSDVG) are enriched in polar residues.

Belongs to the splicing factor SR family. Extensively phosphorylated on serine residues in the RS domain.

It localises to the nucleus. Functionally, has a role in pre-mRNA splicing where it is involved in spliceosome assembly. This is Pre-mRNA-splicing factor srp2 (srp2) from Schizosaccharomyces pombe (strain 972 / ATCC 24843) (Fission yeast).